Consider the following 211-residue polypeptide: Protein Nef (211 aa).

The N-myristoyl glycine; by host moiety is linked to residue G2. Residue S6 is modified to Phosphoserine; by host. Residues 67-70 form an acidic; interacts with host PACS1 and PACS2; stabilizes the interaction of NEF/MHC-I with host AP1M1; necessary for MHC-I internalization region; it reads EDEE. Residues 74 to 83 are SH3-binding; interaction with Src family tyrosine kinases; sequence PVRPQVPLRP. The short motif at 77–80 is the PxxP; stabilizes the interaction of NEF/MHC-I with host AP1M1; necessary for MHC-I internalization element; sequence PQVP. Residues 113–129 form a mediates dimerization, Nef-PTE1 interaction region; it reads DILDLWVYHTQGYFPDW. The tract at residues 153-185 is binding to ATP6V1H; the sequence is MDPDQVEEANEGENNSLLHPISLHGMDDPEKEV. The short motif at 169-170 is the Dileucine internalization motif; necessary for CD4 internalization element; sequence LL. A Diacidic; necessary for CD4 internalization motif is present at residues 179-180; sequence DD.

The protein belongs to the lentivirus primate group Nef protein family. As to quaternary structure, monomer; cytosolic form. Homodimer; membrane bound form. Interacts with Nef associated p21-activated kinase (PAK2); this interaction activates PAK2. Associates with the Nef-MHC-I-AP1 complex; this complex is required for MHC-I internalization. Interacts (via C-terminus) with host PI3-kinase. Interacts with host PACS1; this interaction seems to be weak. Interacts with host PACS2. Interacts with host LCK and MAPK3; these interactions inhibit the kinase activity of the latter. Interacts with host ATP6V1H; this interaction may play a role in CD4 endocytosis. Associates with the CD4-Nef-AP2 complex; this complex is required for CD4 internalization. Interacts with host AP2 subunit alpha and AP2 subunit sigma2. Interacts with TCR-zeta chain; this interaction up-regulates the Fas ligand (FasL) surface expression. Interacts with host HCK, LYN, and SRC; these interactions activate the Src family kinases. Interacts with MAP3K5; this interaction inhibits the Fas and TNFR-mediated death signals. Interacts with beta-COP and PTE1. Interacts with human RACK1; this increases Nef phosphorylation by PKC. Interacts with TP53; this interaction decreases the half-life of TP53, protecting the infected cell against p53-mediated apoptosis. Post-translationally, the virion-associated Nef proteins are cleaved by the viral protease to release the soluble C-terminal core protein. Nef is probably cleaved concomitantly with viral structural proteins on maturation of virus particles. Myristoylated. In terms of processing, phosphorylated on serine residues, probably by host PKCdelta and theta.

Its subcellular location is the host cell membrane. It is found in the virion. The protein resides in the secreted. It localises to the host Golgi apparatus membrane. Factor of infectivity and pathogenicity, required for optimal virus replication. Alters numerous pathways of T-lymphocyte function and down-regulates immunity surface molecules in order to evade host defense and increase viral infectivity. Alters the functionality of other immunity cells, like dendritic cells, monocytes/macrophages and NK cells. Functionally, in infected CD4(+) T-lymphocytes, down-regulates the surface MHC-I, mature MHC-II, CD4, CD28, CCR5 and CXCR4 molecules. Mediates internalization and degradation of host CD4 through the interaction of with the cytoplasmic tail of CD4, the recruitment of AP-2 (clathrin adapter protein complex 2), internalization through clathrin coated pits, and subsequent transport to endosomes and lysosomes for degradation. Diverts host MHC-I molecules to the trans-Golgi network-associated endosomal compartments by an endocytic pathway to finally target them for degradation. MHC-I down-regulation may involve AP-1 (clathrin adapter protein complex 1) or possibly Src family kinase-ZAP70/Syk-PI3K cascade recruited by PACS2. In consequence infected cells are masked for immune recognition by cytotoxic T-lymphocytes. Decreasing the number of immune receptors also prevents reinfection by more HIV particles (superinfection). Down-regulates host SERINC3 and SERINC5 thereby excluding these proteins from the viral particles. Virion infectivity is drastically higher when SERINC3 or SERINC5 are excluded from the viral envelope, because these host antiviral proteins impair the membrane fusion event necessary for subsequent virion penetration. In terms of biological role, bypasses host T-cell signaling by inducing a transcriptional program nearly identical to that of anti-CD3 cell activation. Interaction with TCR-zeta chain up-regulates the Fas ligand (FasL). Increasing surface FasL molecules and decreasing surface MHC-I molecules on infected CD4(+) cells send attacking cytotoxic CD8+ T-lymphocytes into apoptosis. Its function is as follows. Plays a role in optimizing the host cell environment for viral replication without causing cell death by apoptosis. Protects the infected cells from apoptosis in order to keep them alive until the next virus generation is ready to strike. Inhibits the Fas and TNFR-mediated death signals by blocking MAP3K5/ASK1. Decreases the half-life of TP53, protecting the infected cell against p53-mediated apoptosis. Inhibits the apoptotic signals regulated by the Bcl-2 family proteins through the formation of a Nef/PI3-kinase/PAK2 complex that leads to activation of PAK2 and induces phosphorylation of host BAD. Extracellular Nef protein targets CD4(+) T-lymphocytes for apoptosis by interacting with CXCR4 surface receptors. The chain is Protein Nef from Homo sapiens (Human).